The following is a 349-amino-acid chain: MKTIKVLVVDDSAFMRKWISDFLSEHPRLEVIGTARNGREALEKIAALRPDVVTLDVEMPVMNGLETLQRIMRDHPVPVVMVSSTTTEGAENTIAAMQYGAVDFVAKPSGPISLDLYKVKDEMIGKVLHASEANVAALTAPRRQHPSWRPSFKAAARPQQAIVAIGTSTGGPRALETVLTQLPPDLAAPVVAVQHMPKGFTTSLANRLDALAAITVKEAEDGEVLQNGTAYIAPGGVHLIVREEGGALKARFDESPPRAGHRPAVDVLFESLAAIRLCRKIAVIMTGMGSDGTAGLKKLKESGNTKAIAEARETAVVFGMPRAAIEAGVVDVIVPLDSIAAAIVQLIGE.

The Response regulatory domain occupies 5–122; it reads KVLVVDDSAF…SLDLYKVKDE (118 aa). Asp-56 carries the post-translational modification 4-aspartylphosphate. Residues 156-349 enclose the CheB-type methylesterase domain; sequence ARPQQAIVAI…AAAIVQLIGE (194 aa). Catalysis depends on residues Ser-168, His-195, and Asp-291.

Belongs to the CheB family. Phosphorylated by CheA. Phosphorylation of the N-terminal regulatory domain activates the methylesterase activity.

It is found in the cytoplasm. It catalyses the reaction [protein]-L-glutamate 5-O-methyl ester + H2O = L-glutamyl-[protein] + methanol + H(+). The enzyme catalyses L-glutaminyl-[protein] + H2O = L-glutamyl-[protein] + NH4(+). Its function is as follows. Involved in chemotaxis. Part of a chemotaxis signal transduction system that modulates chemotaxis in response to various stimuli. Catalyzes the demethylation of specific methylglutamate residues introduced into the chemoreceptors (methyl-accepting chemotaxis proteins or MCP) by CheR. Also mediates the irreversible deamidation of specific glutamine residues to glutamic acid. This chain is Protein-glutamate methylesterase/protein-glutamine glutaminase, found in Geobacillus kaustophilus (strain HTA426).